The following is a 651-amino-acid chain: MADYSTVPPPSSGSAGGGGGGVVNDAFKDALQRARQIAAKIGGDAGTSLNSNDYGYGGQKRPLEDGDQPDAKKVPPQNDSFGAQLPPMHQQQSRSVMTEEYKVPDGMVGFIIGRGGEQISRIQQESGCKIQIAPDSGGLPERSCMLTGTPESVQSAKRLLDQIVEKGRPAPGFHHGDGPGNAVQEIMIPASKAGLVIGKGGETIKQLQERAGVKMVMIQDGPQNTGADKPLRITGDPYKVQQAKEMVLELIRDQGGFREVRNEYGSRIGGNEGIDVPIPRFAVGIVIGRNGEMIKKIQNDAGVRIQFKPDDGTTPDRIAQITGPPDRCQHAAEIITDLLRSVQAGNPGGPGPGGRGRGRGQGNWNMGPPGGLQEFNFIVPTGKTGLIIGKGGETIKSISQQSGARIELQRSPPPNADPNMKLFTIRGTPQQIDYARQLIEEKIGGPVNPLGPPVPHGPHGVPGPHGPPGPPGPGTPMGPYNPAPYNPGPPGPAPHGPPAPYAPQGWGNAYPHWQQQAPPDPAKAGADPNSAAWAAYYAHYYQQQAQPPPAAPAGAPATTQTNGQGDQQAPAPAGQVDYTKAWEEYYKKMGQAVPAPAGAPPGGQPDYSAAWAEYYRQQAAYYAQTSPQGMPQHPPAPQGFANHARSHHHLY.

Disordered stretches follow at residues 1-24 (MADY…GVVN) and 40-92 (KIGG…HQQQ). Position 2 is an N-acetylalanine (Ala-2). Phosphoserine is present on residues Ser-48 and Ser-51. The span at 61–73 (RPLEDGDQPDAKK) shows a compositional bias: basic and acidic residues. KH domains lie at 96 to 160 (VMTE…KRLL), 181 to 247 (NAVQ…KEMV), and 271 to 335 (NEGI…AEII). Ser-136 is modified (phosphoserine). Phosphothreonine is present on Thr-149. Residues Arg-317, Arg-355, Arg-357, and Arg-359 each carry the omega-N-methylarginine modification. Residues 372-439 (LQEFNFIVPT…QQIDYARQLI (68 aa)) enclose the KH 4 domain. Ser-411 is modified (phosphoserine). A Phosphothreonine modification is found at Thr-428. 3 disordered regions span residues 443–528 (IGGP…GADP), 545–574 (AQPP…APAG), and 625–651 (TSPQ…HHLY). Positions 464–501 (PHGPPGPPGPGTPMGPYNPAPYNPGPPGPAPHGPPAPY) are enriched in pro residues. Composition is skewed to low complexity over residues 514–528 (QQQA…GADP) and 552–574 (PAGA…APAG). Ser-626 carries the phosphoserine modification.

In terms of assembly, found in a complex with PUF60 and far upstream element (FUSE) DNA segment. Interacts with PUF60 and JTV1. Post-translationally, ubiquitinated. This targets the protein for proteasome-mediated degradation.

It is found in the nucleus. Regulates MYC expression by binding to a single-stranded far-upstream element (FUSE) upstream of the MYC promoter. May act both as activator and repressor of transcription. This is Far upstream element-binding protein 1 (Fubp1) from Mus musculus (Mouse).